A 795-amino-acid chain; its full sequence is Endoplasmin (795 aa).

The N-terminal stretch at 1-21 is a signal peptide; it reads MKSAWALALACTLLLAASVTA. The SRT pseudosubstrate motif signature appears at 41–43; that stretch reads SRT. Asparagine 61 and asparagine 106 each carry an N-linked (GlcNAc...) asparagine glycan. Positions 106, 148, 161, and 198 each coordinate ATP. N-linked (GlcNAc...) asparagine glycosylation occurs at asparagine 216. Acidic residues predominate over residues 289–316; that stretch reads EEPVEEEEAKEEKEETDDNEAAVEEEEE. A disordered region spans residues 289 to 322; it reads EEPVEEEEAKEEKEETDDNEAAVEEEEEEKKPKT. Residues asparagine 444, asparagine 480, and asparagine 501 are each glycosylated (N-linked (GlcNAc...) asparagine). Positions 751–795 are disordered; that stretch reads DAKVEEEPEEPEDAAEEAEQDEEEVDADAEDSETQKESTDVKDEL. The segment covering 756 to 782 has biased composition (acidic residues); that stretch reads EEPEEPEDAAEEAEQDEEEVDADAEDS. Residues 783–795 are compositionally biased toward basic and acidic residues; that stretch reads ETQKESTDVKDEL. Residues 792–795 carry the Prevents secretion from ER motif; that stretch reads KDEL.

The protein belongs to the heat shock protein 90 family. As to quaternary structure, homodimer; disulfide-linked.

It localises to the endoplasmic reticulum lumen. It is found in the sarcoplasmic reticulum lumen. It catalyses the reaction ATP + H2O = ADP + phosphate + H(+). ATP-dependent chaperone involved in the processing of proteins in the endoplasmic reticulum, regulating their transport. The protein is Endoplasmin (HSP90B1) of Gallus gallus (Chicken).